The chain runs to 71 residues: DNA gyrase inhibitor YacG (71 aa).

Zn(2+)-binding residues include cysteine 7, cysteine 10, cysteine 26, and cysteine 30.

This sequence belongs to the DNA gyrase inhibitor YacG family. Interacts with GyrB. It depends on Zn(2+) as a cofactor.

In terms of biological role, inhibits all the catalytic activities of DNA gyrase by preventing its interaction with DNA. Acts by binding directly to the C-terminal domain of GyrB, which probably disrupts DNA binding by the gyrase. This chain is DNA gyrase inhibitor YacG, found in Shewanella amazonensis (strain ATCC BAA-1098 / SB2B).